Here is a 127-residue protein sequence, read N- to C-terminus: UPF0325 protein VC_2264 (127 aa).

The protein belongs to the UPF0325 family.

This chain is UPF0325 protein VC_2264, found in Vibrio cholerae serotype O1 (strain ATCC 39315 / El Tor Inaba N16961).